The following is a 353-amino-acid chain: 3-isopropylmalate dehydrogenase (353 aa).

Residues R97, R107, R135, and D219 each coordinate substrate. D219, D243, and D247 together coordinate Mg(2+).

It belongs to the isocitrate and isopropylmalate dehydrogenases family. LeuB type 1 subfamily. As to quaternary structure, homodimer. Mg(2+) is required as a cofactor. Mn(2+) serves as cofactor.

It is found in the cytoplasm. It carries out the reaction (2R,3S)-3-isopropylmalate + NAD(+) = 4-methyl-2-oxopentanoate + CO2 + NADH. Its pathway is amino-acid biosynthesis; L-leucine biosynthesis; L-leucine from 3-methyl-2-oxobutanoate: step 3/4. In terms of biological role, catalyzes the oxidation of 3-carboxy-2-hydroxy-4-methylpentanoate (3-isopropylmalate) to 3-carboxy-4-methyl-2-oxopentanoate. The product decarboxylates to 4-methyl-2 oxopentanoate. The chain is 3-isopropylmalate dehydrogenase from Bacteroides fragilis (strain ATCC 25285 / DSM 2151 / CCUG 4856 / JCM 11019 / LMG 10263 / NCTC 9343 / Onslow / VPI 2553 / EN-2).